Reading from the N-terminus, the 315-residue chain is Transaldolase (315 aa).

Catalysis depends on Lys131, which acts as the Schiff-base intermediate with substrate.

Belongs to the transaldolase family. Type 1 subfamily. As to quaternary structure, homodimer.

The protein localises to the cytoplasm. It carries out the reaction D-sedoheptulose 7-phosphate + D-glyceraldehyde 3-phosphate = D-erythrose 4-phosphate + beta-D-fructose 6-phosphate. It functions in the pathway carbohydrate degradation; pentose phosphate pathway; D-glyceraldehyde 3-phosphate and beta-D-fructose 6-phosphate from D-ribose 5-phosphate and D-xylulose 5-phosphate (non-oxidative stage): step 2/3. Functionally, transaldolase is important for the balance of metabolites in the pentose-phosphate pathway. This Actinobacillus pleuropneumoniae serotype 5b (strain L20) protein is Transaldolase.